The sequence spans 128 residues: Holo-[acyl-carrier-protein] synthase (128 aa).

Residues Asp9 and Glu60 each coordinate Mg(2+).

The protein belongs to the P-Pant transferase superfamily. AcpS family. It depends on Mg(2+) as a cofactor.

The protein localises to the cytoplasm. It carries out the reaction apo-[ACP] + CoA = holo-[ACP] + adenosine 3',5'-bisphosphate + H(+). Its function is as follows. Transfers the 4'-phosphopantetheine moiety from coenzyme A to a Ser of acyl-carrier-protein. In Buchnera aphidicola subsp. Baizongia pistaciae (strain Bp), this protein is Holo-[acyl-carrier-protein] synthase.